Consider the following 306-residue polypeptide: Protein-L-isoaspartate O-methyltransferase 2 (306 aa).

Residues 1-82 (MSTTPPRNKF…ASAATAGGGG (82 aa)) form a disordered region. Over residues 38 to 48 (PAAPTPAPAKP) the composition is skewed to pro residues. Residues 54–77 (PRTAAPAPAPVPASAVEQRASAAT) are compositionally biased toward low complexity. Ser142 is an active-site residue.

It belongs to the methyltransferase superfamily. L-isoaspartyl/D-aspartyl protein methyltransferase family.

Its subcellular location is the cytoplasm. It carries out the reaction [protein]-L-isoaspartate + S-adenosyl-L-methionine = [protein]-L-isoaspartate alpha-methyl ester + S-adenosyl-L-homocysteine. Catalyzes the methyl esterification of L-isoaspartyl residues in peptides and proteins that result from spontaneous decomposition of normal L-aspartyl and L-asparaginyl residues. It plays a role in the repair and/or degradation of damaged proteins. This is Protein-L-isoaspartate O-methyltransferase 2 from Cupriavidus necator (strain ATCC 17699 / DSM 428 / KCTC 22496 / NCIMB 10442 / H16 / Stanier 337) (Ralstonia eutropha).